The sequence spans 232 residues: Orotidine 5'-phosphate decarboxylase (232 aa).

Residues Asp16, Lys38, Asp65 to Thr74, Thr119, Arg180, Gln189, Gly209, and Arg210 contribute to the substrate site. Lys67 acts as the Proton donor in catalysis.

It belongs to the OMP decarboxylase family. Type 1 subfamily. As to quaternary structure, homodimer.

The catalysed reaction is orotidine 5'-phosphate + H(+) = UMP + CO2. Its pathway is pyrimidine metabolism; UMP biosynthesis via de novo pathway; UMP from orotate: step 2/2. Functionally, catalyzes the decarboxylation of orotidine 5'-monophosphate (OMP) to uridine 5'-monophosphate (UMP). The polypeptide is Orotidine 5'-phosphate decarboxylase (Methylorubrum populi (strain ATCC BAA-705 / NCIMB 13946 / BJ001) (Methylobacterium populi)).